The chain runs to 225 residues: Cytidylate kinase (225 aa).

11–19 (GPAGVGKST) contacts ATP.

This sequence belongs to the cytidylate kinase family. Type 1 subfamily.

The protein localises to the cytoplasm. It carries out the reaction CMP + ATP = CDP + ADP. The enzyme catalyses dCMP + ATP = dCDP + ADP. The sequence is that of Cytidylate kinase from Lawsonia intracellularis (strain PHE/MN1-00).